Reading from the N-terminus, the 430-residue chain is MQASIESTGNLERRLTFTLPQERLETHVGGRLRELARTTRIKGFRPGKVPTKVIEQRFGQQVRAEAMEGLLRETFDSAVREHSLRLAGNPRIDQGETDFDFVATFEVVPDFGDIDVTTLSVVRATAEVTDADIDQMIENLRLQRRIWNPVERGAQAGDLVALETWSQAGDERLPADGVETGSSVLGSGVMFDQIEKGLEGLTKGEEKTLSVDFPAEWRVPQLAGKTVQVHVKAVEVSEPVLPAVDKEFIKSFGVKSGDAEQFRADIRTNLERELKGALMNRLRREVGEQLIAAYAHVEMPPRLVENEARSMLAQQVEQVRRSGRDPGQVPADAHQGFMDAAAKRVLVGLLVGEVARRNELRLESRRVSDTLRLIASTYEEPEQVIEMYRNDPQLMNGLQSRVMKEQVIDWIAERAQHTEQSLSFQDAIRV.

The PPIase FKBP-type domain occupies 157–242 (GDLVALETWS…AVEVSEPVLP (86 aa)).

Belongs to the FKBP-type PPIase family. Tig subfamily.

The protein resides in the cytoplasm. It carries out the reaction [protein]-peptidylproline (omega=180) = [protein]-peptidylproline (omega=0). Its function is as follows. Involved in protein export. Acts as a chaperone by maintaining the newly synthesized protein in an open conformation. Functions as a peptidyl-prolyl cis-trans isomerase. The sequence is that of Trigger factor from Xanthomonas oryzae pv. oryzae (strain MAFF 311018).